The primary structure comprises 739 residues: Exocyst complex component 3-like protein (739 aa).

2 disordered regions span residues 1-21 and 698-718; these read MDSK…PEWP and AALS…RRAL. The mediates interaction with EXOC2, EXOC4 and EXOC5 stretch occupies residues 1-370; that stretch reads MDSKIQPTLR…DVSQLEPLLT (370 aa).

This sequence belongs to the SEC6 family. As to quaternary structure, interacts with EXOC2, EXOC4 and EXOC5; may be part of the exocyst. Ubiquitously expressed.

It is found in the cytoplasmic vesicle. Its subcellular location is the secretory vesicle. Functionally, as part of the exocyst, may play a role in regulated exocytosis of insulin granules. The protein is Exocyst complex component 3-like protein (Exoc3l1) of Mus musculus (Mouse).